A 92-amino-acid polypeptide reads, in one-letter code: Enhancer of yellow 2 transcription factor (92 aa).

Belongs to the ENY2 family. As to quaternary structure, component of the nuclear pore complex (NPC)-associated TREX-2 complex (transcription and export complex 2). Component of the SAGA transcription coactivator-HAT complex. Within the SAGA complex, participates in a subcomplex of SAGA called the DUB module (deubiquitination module).

Its subcellular location is the nucleus. It is found in the nucleoplasm. Its function is as follows. Involved in mRNA export coupled transcription activation by association with both the TREX-2 and the SAGA complexes. The transcription regulatory histone acetylation (HAT) complex SAGA is a multiprotein complex that activates transcription by remodeling chromatin and mediating histone acetylation and deubiquitination. Within the SAGA complex, participates in a subcomplex that specifically deubiquitinates histones. The SAGA complex is recruited to specific gene promoters by activators, where it is required for transcription. The TREX-2 complex functions in docking export-competent ribonucleoprotein particles (mRNPs) to the nuclear entrance of the nuclear pore complex (nuclear basket). TREX-2 participates in mRNA export and accurate chromatin positioning in the nucleus by tethering genes to the nuclear periphery. This is Enhancer of yellow 2 transcription factor from Aedes aegypti (Yellowfever mosquito).